Consider the following 172-residue polypeptide: Male-specific submandibular salivary gland protein (172 aa).

The signal sequence occupies residues 1 to 15 (MVKFLLLALALGVSC). Asn41 is a glycosylation site (N-linked (GlcNAc...) asparagine). Cystine bridges form between Cys60/Cys64 and Cys79/Cys170.

Belongs to the calycin superfamily. Lipocalin family. In terms of processing, N-glycosylated. As to expression, expressed in acinar cells of the submandibular salivary gland from where it is secreted into saliva (at protein level). Also released from the submandibular salivary gland into blood and excreted in urine (at protein level). Expressed in the lacrimal gland from where it is secreted into tears (at protein level).

It localises to the secreted. The protein localises to the cytoplasm. In Mesocricetus auratus (Golden hamster), this protein is Male-specific submandibular salivary gland protein.